Here is a 39-residue protein sequence, read N- to C-terminus: Fructose 5-dehydrogenase [NADP(+)] (39 aa).

It carries out the reaction D-fructose + NADP(+) = 5-dehydro-D-fructose + NADPH + H(+). The polypeptide is Fructose 5-dehydrogenase [NADP(+)] (Erwinia citreus).